The sequence spans 692 residues: Methionine--tRNA ligase (692 aa).

Positions 15-25 (PYANGPIHLGH) match the 'HIGH' region motif. The Zn(2+) site is built by Cys146, Cys149, Cys159, and Cys162. The 'KMSKS' region signature appears at 332-336 (KMSKS). Lys335 lines the ATP pocket. The interval 552 to 577 (TTEAAPEKKAKKSAETADVAVDTRSP) is disordered. Positions 556–566 (APEKKAKKSAE) are enriched in basic and acidic residues. One can recognise a tRNA-binding domain in the interval 591–692 (DFAKLDLRIA…EGAQPGMRVK (102 aa)).

Belongs to the class-I aminoacyl-tRNA synthetase family. MetG type 1 subfamily. In terms of assembly, homodimer. Zn(2+) is required as a cofactor.

Its subcellular location is the cytoplasm. The enzyme catalyses tRNA(Met) + L-methionine + ATP = L-methionyl-tRNA(Met) + AMP + diphosphate. Its function is as follows. Is required not only for elongation of protein synthesis but also for the initiation of all mRNA translation through initiator tRNA(fMet) aminoacylation. The chain is Methionine--tRNA ligase from Shewanella sediminis (strain HAW-EB3).